The following is a 194-amino-acid chain: Thymidine kinase (194 aa).

ATP is bound by residues 15–22 (GSMFSGKS) and 88–91 (DEVQ). The active-site Proton acceptor is the Glu89. The Zn(2+) site is built by Cys145, Cys148, Cys183, and His186.

The protein belongs to the thymidine kinase family. In terms of assembly, homotetramer.

It localises to the cytoplasm. The enzyme catalyses thymidine + ATP = dTMP + ADP + H(+). This Bacillus velezensis (strain DSM 23117 / BGSC 10A6 / LMG 26770 / FZB42) (Bacillus amyloliquefaciens subsp. plantarum) protein is Thymidine kinase.